We begin with the raw amino-acid sequence, 205 residues long: MNDNREQLTQQIIDAGRFLYGRGWSPATSSNYSARLDEGRALLTVSGRHKGQLGFDDVLATDLAGNSLEPGKKPSAETLLHTQLYAWSPAIGAVLHTHSVNATVLSRLVRGDRLVLQDYELQKAFAGVTTHEGQVEVPIFDNDQDIARLAGRVQPWLEAHPDCPGYLIRGHGLYTWGARMSDALRQVEAFEFLFECELKVLSLSR.

2 residues coordinate Zn(2+): H96 and H98.

This sequence belongs to the aldolase class II family. MtnB subfamily. Zn(2+) is required as a cofactor.

The catalysed reaction is 5-(methylsulfanyl)-D-ribulose 1-phosphate = 5-methylsulfanyl-2,3-dioxopentyl phosphate + H2O. It functions in the pathway amino-acid biosynthesis; L-methionine biosynthesis via salvage pathway; L-methionine from S-methyl-5-thio-alpha-D-ribose 1-phosphate: step 2/6. Catalyzes the dehydration of methylthioribulose-1-phosphate (MTRu-1-P) into 2,3-diketo-5-methylthiopentyl-1-phosphate (DK-MTP-1-P). This Pseudomonas paraeruginosa (strain DSM 24068 / PA7) (Pseudomonas aeruginosa (strain PA7)) protein is Methylthioribulose-1-phosphate dehydratase.